Consider the following 263-residue polypeptide: Hydroxyethylthiazole kinase (263 aa).

Residue methionine 41 coordinates substrate. ATP-binding residues include arginine 117 and threonine 163. Glycine 190 contacts substrate.

This sequence belongs to the Thz kinase family. Mg(2+) is required as a cofactor.

The catalysed reaction is 5-(2-hydroxyethyl)-4-methylthiazole + ATP = 4-methyl-5-(2-phosphooxyethyl)-thiazole + ADP + H(+). Its pathway is cofactor biosynthesis; thiamine diphosphate biosynthesis; 4-methyl-5-(2-phosphoethyl)-thiazole from 5-(2-hydroxyethyl)-4-methylthiazole: step 1/1. Its function is as follows. Catalyzes the phosphorylation of the hydroxyl group of 4-methyl-5-beta-hydroxyethylthiazole (THZ). The sequence is that of Hydroxyethylthiazole kinase from Exiguobacterium sp. (strain ATCC BAA-1283 / AT1b).